A 476-amino-acid polypeptide reads, in one-letter code: Protein transport protein Sec61 subunit alpha-like 1 (476 aa).

Residues 2-33 lie on the Cytoplasmic side of the membrane; that stretch reads AIKFLEVIKPFCAVLPEIQKPERKIQFREKVL. Residues 34–53 traverse the membrane as a helical segment; sequence WTAITLFIFLVCCQIPLFGI. Residues 54-76 lie on the Lumenal side of the membrane; the sequence is MSSDSADPFYWMRVILASNRGTL. Residues 77–96 form a helical membrane-spanning segment; it reads MELGISPIVTSGLIMQLLAG. Over 97 to 117 the chain is Cytoplasmic; that stretch reads AKIIEVGDTPKDRALFNGAQK. The helical transmembrane segment at 118–138 threads the bilayer; that stretch reads LFGMIITIGQAIVYVMTGMYG. Residues 139–144 lie on the Lumenal side of the membrane; sequence DPSEMG. The chain crosses the membrane as a helical span at residues 145-165; sequence AGICLLIIIQLFVAGLIVLLL. Residues 166 to 172 lie on the Cytoplasmic side of the membrane; sequence DELLQKG. The chain crosses the membrane as a helical span at residues 173-193; that stretch reads YGLGSGISLFIATNICETIVW. The Lumenal segment spans residues 194 to 240; it reads KAFSPTTVNTGRGTEFEGAIIALFHLLATRTDKVRALREAFYRQNLP. Residues 241-261 form a helical membrane-spanning segment; the sequence is NLMNLIATVFVFAVVIYFQGF. Residues 262-288 are Cytoplasmic-facing; it reads RVDLPIKSARYRGQYNTYPIKLFYTSN. Residues 289–309 form a helical membrane-spanning segment; it reads IPIILQSALVSNLYVISQMLS. Residues 310 to 354 are Lumenal-facing; it reads TRFSGNFLVNLLGTWSDTSSGGPARAYPVGGLCYYLSPPESFGSV. A helical transmembrane segment spans residues 355–375; the sequence is LDDPVHAVIYIVFMLGSCAFF. At 376-420 the chain is on the cytoplasmic side; sequence SKTWIEVSGSSAKDVAKQLKEQQMVMRGHRETSMVHELNRYIPTA. Residues 421–441 traverse the membrane as a helical segment; the sequence is AAFGGLCIGGLSVMADFLGAI. The Lumenal portion of the chain corresponds to 442 to 445; the sequence is GSGT. The helical transmembrane segment at 446-462 threads the bilayer; the sequence is GILLAVTIIYQYFEIFV. Topologically, residues 463-476 are cytoplasmic; the sequence is KEQSEVGSMGALLF.

This sequence belongs to the SecY/SEC61-alpha family. The SEC61 channel-forming translocon complex consists of channel-forming core components SEC61A1, SEC61B and SEC61G and different auxiliary components such as SEC62 and SEC63. The SEC61 channel associates with the multi-pass translocon (MPT) complex.

The protein resides in the endoplasmic reticulum membrane. Component of SEC61 channel-forming translocon complex that mediates transport of signal peptide-containing precursor polypeptides across the endoplasmic reticulum (ER). Forms a ribosome receptor and a gated pore in the ER membrane, both functions required for cotranslational translocation of nascent polypeptides. May cooperate with auxiliary protein SEC62, SEC63 and HSPA5/BiP to enable post-translational transport of small presecretory proteins. The SEC61 channel is also involved in ER membrane insertion of transmembrane proteins: it mediates membrane insertion of the first few transmembrane segments of proteins, while insertion of subsequent transmembrane regions of multi-pass membrane proteins is mediated by the multi-pass translocon (MPT) complex. Plays a role in the pronephric kidney tubule development. In Danio rerio (Zebrafish), this protein is Protein transport protein Sec61 subunit alpha-like 1 (sec61al1).